Consider the following 400-residue polypeptide: Acetate kinase (400 aa).

Asn10 contributes to the Mg(2+) binding site. Lys17 contacts ATP. A substrate-binding site is contributed by Arg91. Asp150 functions as the Proton donor/acceptor in the catalytic mechanism. ATP is bound by residues 210 to 214, 285 to 287, and 333 to 337; these read HLGNG, DCR, and GIGEN. Position 387 (Glu387) interacts with Mg(2+).

The protein belongs to the acetokinase family. In terms of assembly, homodimer. Mg(2+) is required as a cofactor. Mn(2+) serves as cofactor.

It is found in the cytoplasm. The catalysed reaction is acetate + ATP = acetyl phosphate + ADP. It participates in metabolic intermediate biosynthesis; acetyl-CoA biosynthesis; acetyl-CoA from acetate: step 1/2. Catalyzes the formation of acetyl phosphate from acetate and ATP. Can also catalyze the reverse reaction. In Erwinia tasmaniensis (strain DSM 17950 / CFBP 7177 / CIP 109463 / NCPPB 4357 / Et1/99), this protein is Acetate kinase.